Here is a 303-residue protein sequence, read N- to C-terminus: Acetylglutamate kinase (303 aa).

Substrate contacts are provided by residues 68 to 69 (GG), R90, and N194.

The protein belongs to the acetylglutamate kinase family. ArgB subfamily.

The protein localises to the cytoplasm. It catalyses the reaction N-acetyl-L-glutamate + ATP = N-acetyl-L-glutamyl 5-phosphate + ADP. The protein operates within amino-acid biosynthesis; L-arginine biosynthesis; N(2)-acetyl-L-ornithine from L-glutamate: step 2/4. Catalyzes the ATP-dependent phosphorylation of N-acetyl-L-glutamate. In Psychrobacter arcticus (strain DSM 17307 / VKM B-2377 / 273-4), this protein is Acetylglutamate kinase.